We begin with the raw amino-acid sequence, 243 residues long: Ribonuclease PH (243 aa).

Residues Arg84 and 122 to 124 contribute to the phosphate site; that span reads GTR.

Belongs to the RNase PH family. As to quaternary structure, homohexameric ring arranged as a trimer of dimers.

It carries out the reaction tRNA(n+1) + phosphate = tRNA(n) + a ribonucleoside 5'-diphosphate. In terms of biological role, phosphorolytic 3'-5' exoribonuclease that plays an important role in tRNA 3'-end maturation. Removes nucleotide residues following the 3'-CCA terminus of tRNAs; can also add nucleotides to the ends of RNA molecules by using nucleoside diphosphates as substrates, but this may not be physiologically important. Probably plays a role in initiation of 16S rRNA degradation (leading to ribosome degradation) during starvation. The polypeptide is Ribonuclease PH (Bdellovibrio bacteriovorus (strain ATCC 15356 / DSM 50701 / NCIMB 9529 / HD100)).